The chain runs to 329 residues: 7,8-didemethyl-8-hydroxy-5-deazariboflavin synthase (329 aa).

A Radical SAM core domain is found at 1-235 (MFIPVTNICR…SDVSVQVAPN (235 aa)). Cys-9, Cys-13, and Cys-16 together coordinate [4Fe-4S] cluster.

Belongs to the radical SAM superfamily. CofG family. In terms of assembly, consists of two subunits, CofG and CofH. It depends on [4Fe-4S] cluster as a cofactor.

The enzyme catalyses 5-amino-5-(4-hydroxybenzyl)-6-(D-ribitylimino)-5,6-dihydrouracil + S-adenosyl-L-methionine = 7,8-didemethyl-8-hydroxy-5-deazariboflavin + 5'-deoxyadenosine + L-methionine + NH4(+) + H(+). It functions in the pathway cofactor biosynthesis; coenzyme F0 biosynthesis. Catalyzes the radical-mediated synthesis of 7,8-didemethyl-8-hydroxy-5-deazariboflavin from 5-amino-5-(4-hydroxybenzyl)-6-(D-ribitylimino)-5,6-dihydrouracil. The polypeptide is 7,8-didemethyl-8-hydroxy-5-deazariboflavin synthase (Methanosarcina acetivorans (strain ATCC 35395 / DSM 2834 / JCM 12185 / C2A)).